The primary structure comprises 504 residues: Histidine ammonia-lyase (504 aa).

A cross-link (5-imidazolinone (Ala-Gly)) is located at residues 142 to 144 (ASG). Ser143 is modified (2,3-didehydroalanine (Ser)).

Belongs to the PAL/histidase family. Contains an active site 4-methylidene-imidazol-5-one (MIO), which is formed autocatalytically by cyclization and dehydration of residues Ala-Ser-Gly.

Its subcellular location is the cytoplasm. It catalyses the reaction L-histidine = trans-urocanate + NH4(+). Its pathway is amino-acid degradation; L-histidine degradation into L-glutamate; N-formimidoyl-L-glutamate from L-histidine: step 1/3. In Staphylococcus aureus (strain USA300), this protein is Histidine ammonia-lyase.